Here is a 327-residue protein sequence, read N- to C-terminus: Interleukin-12 subunit beta (327 aa).

Positions 1-22 (MHPQQLVVSWFSLVLLASPIVA) are cleaved as a signal peptide. The Ig-like C2-type domain maps to 23 to 106 (IWELEKNVYV…LSRSLLLLHK (84 aa)). Cys50 and Cys90 are disulfide-bonded. A glycan (N-linked (GlcNAc...) asparagine) is linked at Asn223. A Fibronectin type-III domain is found at 238–327 (PPKNLQLRPL…WSEWASVSCS (90 aa)).

This sequence belongs to the IL-12B family. In terms of assembly, heterodimer with IL12A; disulfide-linked. The heterodimer is known as interleukin IL-12. Heterodimer with IL23A; disulfide-linked. The heterodimer is known as interleukin IL-23. Also secreted as a monomer. Interacts with NBR1; this interaction promotes IL-12 secretion.

It localises to the secreted. Functionally, cytokine that can act as a growth factor for activated T and NK cells, enhance the lytic activity of NK/lymphokine-activated killer cells, and stimulate the production of IFN-gamma by resting PBMC. Associates with IL23A to form the IL-23 interleukin, a heterodimeric cytokine which functions in innate and adaptive immunity. IL-23 may constitute with IL-17 an acute response to infection in peripheral tissues. IL-23 binds to a heterodimeric receptor complex composed of IL12RB1 and IL23R, activates the Jak-Stat signaling cascade, stimulates memory rather than naive T-cells and promotes production of pro-inflammatory cytokines. IL-23 induces autoimmune inflammation and thus may be responsible for autoimmune inflammatory diseases and may be important for tumorigenesis. The polypeptide is Interleukin-12 subunit beta (IL12B) (Capra hircus (Goat)).